Here is a 330-residue protein sequence, read N- to C-terminus: Aspartate--ammonia ligase (330 aa).

Belongs to the class-II aminoacyl-tRNA synthetase family. AsnA subfamily.

Its subcellular location is the cytoplasm. It catalyses the reaction L-aspartate + NH4(+) + ATP = L-asparagine + AMP + diphosphate + H(+). It participates in amino-acid biosynthesis; L-asparagine biosynthesis; L-asparagine from L-aspartate (ammonia route): step 1/1. The polypeptide is Aspartate--ammonia ligase (Streptococcus thermophilus (strain ATCC BAA-250 / LMG 18311)).